Reading from the N-terminus, the 446-residue chain is Argininosuccinate synthase (446 aa).

Residues alanine 17–serine 25 and alanine 43 each bind ATP. Residue tyrosine 99 participates in L-citrulline binding. The ATP site is built by glycine 129 and threonine 131. The L-aspartate site is built by threonine 131, asparagine 135, and aspartate 136. Asparagine 135 serves as a coordination point for L-citrulline. Residue aspartate 136 coordinates ATP. L-citrulline is bound by residues arginine 139 and serine 192. An ATP-binding site is contributed by aspartate 194. The L-citrulline site is built by threonine 201, glutamate 203, and glutamate 280.

Belongs to the argininosuccinate synthase family. Type 2 subfamily. In terms of assembly, homotetramer.

Its subcellular location is the cytoplasm. The enzyme catalyses L-citrulline + L-aspartate + ATP = 2-(N(omega)-L-arginino)succinate + AMP + diphosphate + H(+). It functions in the pathway amino-acid biosynthesis; L-arginine biosynthesis; L-arginine from L-ornithine and carbamoyl phosphate: step 2/3. The sequence is that of Argininosuccinate synthase from Methylibium petroleiphilum (strain ATCC BAA-1232 / LMG 22953 / PM1).